A 474-amino-acid polypeptide reads, in one-letter code: GTPase Der (474 aa).

EngA-type G domains follow at residues 3–167 (LTIA…GSER) and 204–379 (IRIA…RVWN). Residues 9-16 (GRPNVGKS), 56-60 (DTAGL), 119-122 (NKSE), 210-217 (GRPNTGKS), 257-261 (DTAGL), and 322-325 (NKWD) each bind GTP. The KH-like domain occupies 380-464 (RRISTAKLNQ…PVRLSLRASD (85 aa)).

It belongs to the TRAFAC class TrmE-Era-EngA-EngB-Septin-like GTPase superfamily. EngA (Der) GTPase family. As to quaternary structure, associates with the 50S ribosomal subunit.

Its function is as follows. GTPase that plays an essential role in the late steps of ribosome biogenesis. The polypeptide is GTPase Der (Bartonella tribocorum (strain CIP 105476 / IBS 506)).